We begin with the raw amino-acid sequence, 520 residues long: UDP-N-acetylmuramoyl-L-alanyl-D-glutamate--2,6-diaminopimelate ligase (520 aa).

Leu48 provides a ligand contact to UDP-N-acetyl-alpha-D-muramoyl-L-alanyl-D-glutamate. 134-140 (GTSGKTT) provides a ligand contact to ATP. UDP-N-acetyl-alpha-D-muramoyl-L-alanyl-D-glutamate-binding positions include 176-177 (TT), Ser203, and Arg211. Lys243 carries the N6-carboxylysine modification. Residues Arg405, 429 to 432 (DNPR), Gly483, and Glu487 contribute to the meso-2,6-diaminopimelate site. Residues 429 to 432 (DNPR) carry the Meso-diaminopimelate recognition motif motif.

The protein belongs to the MurCDEF family. MurE subfamily. Mg(2+) serves as cofactor. Carboxylation is probably crucial for Mg(2+) binding and, consequently, for the gamma-phosphate positioning of ATP.

The protein localises to the cytoplasm. It carries out the reaction UDP-N-acetyl-alpha-D-muramoyl-L-alanyl-D-glutamate + meso-2,6-diaminopimelate + ATP = UDP-N-acetyl-alpha-D-muramoyl-L-alanyl-gamma-D-glutamyl-meso-2,6-diaminopimelate + ADP + phosphate + H(+). The protein operates within cell wall biogenesis; peptidoglycan biosynthesis. Catalyzes the addition of meso-diaminopimelic acid to the nucleotide precursor UDP-N-acetylmuramoyl-L-alanyl-D-glutamate (UMAG) in the biosynthesis of bacterial cell-wall peptidoglycan. The sequence is that of UDP-N-acetylmuramoyl-L-alanyl-D-glutamate--2,6-diaminopimelate ligase from Mycolicibacterium paratuberculosis (strain ATCC BAA-968 / K-10) (Mycobacterium paratuberculosis).